We begin with the raw amino-acid sequence, 450 residues long: MATQAKRRRVAGPAGSDDDPAPVASFLSWCQRVGLELSPKVAVSRQGTVAGYGMVARESVQPGELLFAVPRAALLSQHTCSISGVLERERGALQSQSGWVPLLLALLHEMQAPASPWSPYFALWPELGRLQHPMFWPEEERRRLLQGTGVPEAVEKDLVNIRSEYYSIVLPFMDAHPDLFSPRVRSLELYRQLVALVMAYSFQEPLEEEEDEKEPNSPLMVPAADILNHLANHNANLEYSPTCLRMVAIQPIPKGHEIFNTYGQMANWQLIHMYGFAEPYPDNTNDTADIQMVTVREAALQGTKVEAERLLLYERWDFLCKLEMVGEEGAFVIGREEVLTEEELATTLKVLCMPAEEFRAFKDQNGWEDDKSEEDSLTITDIPKLKASWRQLLRDSVLLTLQTYATDLKTEQDLLSNKEVYAALSWREQQALQVRYGQKMILHRLLELTR.

Over residues 1-10 the composition is skewed to basic residues; the sequence is MATQAKRRRV. Residues 1–20 form a disordered region; that stretch reads MATQAKRRRVAGPAGSDDDP. Positions 39-263 constitute an SET domain; that stretch reads PKVAVSRQGT…KGHEIFNTYG (225 aa). Lys-40 bears the N6-methylated lysine; by autocatalysis mark. An S-adenosyl-L-methionine-binding site is contributed by 50-52; it reads AGY. Trp-99 contacts substrate. The residue at position 156 (Lys-156) is an N6-methylated lysine; by autocatalysis. S-adenosyl-L-methionine is bound at residue Tyr-200. Positions 201 and 203 each coordinate substrate. S-adenosyl-L-methionine is bound by residues 228-229 and Tyr-274; that span reads NH. Lys-349 bears the N6-methylated lysine; by autocatalysis mark.

It belongs to the class V-like SAM-binding methyltransferase superfamily. Histone-lysine methyltransferase family. SETD6 subfamily. As to quaternary structure, monomer, homodimer and homotrimer; these structures are stabilized in the presence of S-adenosyl-L-methionine (SAM). Post-translationally, automethylated.

The protein localises to the nucleus. The enzyme catalyses L-lysyl-[protein] + S-adenosyl-L-methionine = N(6)-methyl-L-lysyl-[protein] + S-adenosyl-L-homocysteine + H(+). It carries out the reaction L-lysyl(8)-[histone H2AZ] + S-adenosyl-L-methionine = N(6)-methyl-L-lysyl(8)-[histone H2AZ] + S-adenosyl-L-homocysteine + H(+). In terms of biological role, protein-lysine N-methyltransferase. Monomethylates 'Lys-310' of the RELA subunit of NF-kappa-B complex, leading to down-regulation of NF-kappa-B transcription factor activity. Monomethylates 'Lys-8' of H2AZ (H2AZK8me1). Required for the maintenance of embryonic stem cell self-renewal. Methylates PAK4. This is N-lysine methyltransferase SETD6 (SETD6) from Bos taurus (Bovine).